Consider the following 420-residue polypeptide: Glucose-1-phosphate adenylyltransferase (420 aa).

Residues tyrosine 107, glycine 172, 187–188 (EK), and serine 205 contribute to the alpha-D-glucose 1-phosphate site.

The protein belongs to the bacterial/plant glucose-1-phosphate adenylyltransferase family. In terms of assembly, homotetramer.

The catalysed reaction is alpha-D-glucose 1-phosphate + ATP + H(+) = ADP-alpha-D-glucose + diphosphate. It functions in the pathway glycan biosynthesis; glycogen biosynthesis. Involved in the biosynthesis of ADP-glucose, a building block required for the elongation reactions to produce glycogen. Catalyzes the reaction between ATP and alpha-D-glucose 1-phosphate (G1P) to produce pyrophosphate and ADP-Glc. This chain is Glucose-1-phosphate adenylyltransferase, found in Rhizobium johnstonii (strain DSM 114642 / LMG 32736 / 3841) (Rhizobium leguminosarum bv. viciae).